The primary structure comprises 154 residues: MKKLLGGPGTVCGLLLRIGQCASAAASIGVMVSAKEFSVHTAFCYLIASMGLQLLWSFGLACLDVYALRGKKDLQNPILVSLFVVGDWVTAMLSLAAACSSAGVVVLYEKDIKYCNTQSQYPCLRYEVAVALSFVTWIQIAVSSHVTFWILASV.

The Cytoplasmic portion of the chain corresponds to 1-10 (MKKLLGGPGT). The chain crosses the membrane as a helical span at residues 11-31 (VCGLLLRIGQCASAAASIGVM). Over 32–42 (VSAKEFSVHTA) the chain is Extracellular. The chain crosses the membrane as a helical span at residues 43–63 (FCYLIASMGLQLLWSFGLACL). Residues 64 to 77 (DVYALRGKKDLQNP) lie on the Cytoplasmic side of the membrane. The chain crosses the membrane as a helical span at residues 78-98 (ILVSLFVVGDWVTAMLSLAAA). Topologically, residues 99–129 (CSSAGVVVLYEKDIKYCNTQSQYPCLRYEVA) are extracellular. The chain crosses the membrane as a helical span at residues 130 to 150 (VALSFVTWIQIAVSSHVTFWI). Residues 151 to 154 (LASV) are Cytoplasmic-facing.

This sequence belongs to the Casparian strip membrane proteins (CASP) family. Homodimer and heterodimers. Expressed in the stele of the root.

The protein resides in the cell membrane. This Arabidopsis thaliana (Mouse-ear cress) protein is CASP-like protein 5B2.